The chain runs to 379 residues: Cytochrome b (379 aa).

A run of 4 helical transmembrane segments spans residues 33-53 (FGSL…FLAM), 77-98 (WLIR…FIHV), 113-133 (WNIG…GYVL), and 178-198 (FFAF…VHLL). Heme b contacts are provided by His83 and His97. Residues His182 and His196 each contribute to the heme b site. His201 is an a ubiquinone binding site. The next 4 membrane-spanning stretches (helical) occupy residues 226–246 (IKDL…ALFF), 288–308 (LGGV…PLLN), 320–340 (ITQT…WIGG), and 347–367 (FTTI…ILMP).

This sequence belongs to the cytochrome b family. The cytochrome bc1 complex contains 11 subunits: 3 respiratory subunits (MT-CYB, CYC1 and UQCRFS1), 2 core proteins (UQCRC1 and UQCRC2) and 6 low-molecular weight proteins (UQCRH/QCR6, UQCRB/QCR7, UQCRQ/QCR8, UQCR10/QCR9, UQCR11/QCR10 and a cleavage product of UQCRFS1). This cytochrome bc1 complex then forms a dimer. Requires heme b as cofactor.

The protein resides in the mitochondrion inner membrane. Its function is as follows. Component of the ubiquinol-cytochrome c reductase complex (complex III or cytochrome b-c1 complex) that is part of the mitochondrial respiratory chain. The b-c1 complex mediates electron transfer from ubiquinol to cytochrome c. Contributes to the generation of a proton gradient across the mitochondrial membrane that is then used for ATP synthesis. This Akodon aerosus (Highland grass mouse) protein is Cytochrome b (MT-CYB).